The following is a 66-amino-acid chain: U8-myrmicitoxin-Tb1a (66 aa).

An N-terminal signal peptide occupies residues 1–26; that stretch reads MKLSFLSLAFAVIFVMAIMYAPQVEA. A propeptide spanning residues 27–50 is cleaved from the precursor; that stretch reads KASADADADADAAASADALAKASA.

As to expression, expressed by the venom gland.

It is found in the secreted. In vivo, this neurotoxin paralyzes about 50% of blowflies (L.caesar) one hour after intrathoracic injection, when tested at high doses (54 nmol/g). The protein is U8-myrmicitoxin-Tb1a of Tetramorium bicarinatum (Tramp ant).